The chain runs to 146 residues: Hemoglobin subunit beta (146 aa).

In terms of domain architecture, Globin spans 2 to 146; it reads QWTAEEKQLI…VAHALARKYH (145 aa). Positions 63 and 92 each coordinate heme b.

This sequence belongs to the globin family. In terms of assembly, heterotetramer of two alpha chains and two beta chains. As to expression, red blood cells.

Its function is as follows. Involved in oxygen transport from the lung to the various peripheral tissues. The protein is Hemoglobin subunit beta (HBB) of Sturnus vulgaris (Starling).